The primary structure comprises 287 residues: U-megalopygitoxin(8)-Mc8 (287 aa).

The N-terminal stretch at 1–17 (MYLQYLVLSLFSTTVYG) is a signal peptide.

The protein belongs to the caterpillar 8 family. Post-translationally, contains 2 disulfide bonds. Expressed by the venom apparatus.

It localises to the secreted. Functionally, probable toxin. The polypeptide is U-megalopygitoxin(8)-Mc8 (Megalopyge crispata (Black-waved flannel moth)).